A 404-amino-acid polypeptide reads, in one-letter code: Putative arginine deiminase (404 aa).

Catalysis depends on cysteine 394, which acts as the Amidino-cysteine intermediate.

It belongs to the arginine deiminase family.

It is found in the cytoplasm. It catalyses the reaction L-arginine + H2O = L-citrulline + NH4(+). It functions in the pathway amino-acid degradation; L-arginine degradation via ADI pathway; carbamoyl phosphate from L-arginine: step 1/2. The protein is Putative arginine deiminase (arcA) of Mycoplasma pneumoniae (strain ATCC 29342 / M129 / Subtype 1) (Mycoplasmoides pneumoniae).